Reading from the N-terminus, the 556-residue chain is General transcription factor IIF subunit 1 (556 aa).

2 disordered regions span residues 82–128 (TMTS…PAAA) and 226–499 (SRLQ…PFTE). A compositionally biased stretch (low complexity) spans 84–128 (TSAPNGTNSTGTTPNTTTTTTTTTTTTTTTTTAAGTPGAPNPAAA). The segment covering 245 to 275 (SGKKSIEELEEAEHRNRNEDPNRYKTTNEEK) has biased composition (basic and acidic residues). 2 stretches are compositionally biased toward acidic residues: residues 291–338 (GNGE…DVDL) and 378–394 (GDDE…DQDD). 2 stretches are compositionally biased toward basic and acidic residues: residues 415–427 (VKKE…DSKS) and 450–461 (NKSDSSVDNRES). Low complexity predominate over residues 469–492 (SSPQAVQPNSPSQQQQQQQQNIDP).

Belongs to the TFIIF alpha subunit family. In terms of assembly, heterodimer of an alpha and a beta subunit.

The protein resides in the nucleus. Its function is as follows. TFIIF is a general transcription initiation factor that binds to RNA polymerase II and helps to recruit it to the initiation complex in collaboration with TFIIB. It promotes transcription elongation. The chain is General transcription factor IIF subunit 1 (gtf2f1) from Dictyostelium discoideum (Social amoeba).